Consider the following 277-residue polypeptide: Putative protein-disulfide oxidoreductase RC0029 (277 aa).

A signal peptide spans 1–22 (MRSIFIILIFLLFLSSCSEEKA). Residues 34–80 (EHETQNNETSKATNQEAVNSENTTESIVPANDNNQTDEVSTPASQKQ) are disordered. Polar residues predominate over residues 39–80 (NNETSKATNQEAVNSENTTESIVPANDNNQTDEVSTPASQKQ). The region spanning 76-265 (ASQKQKNPAI…ISTAVDKALE (190 aa)) is the Thioredoxin domain. Cys118 and Cys121 are oxidised to a cystine.

Belongs to the thioredoxin family. DsbA subfamily.

Its subcellular location is the periplasm. May be required for disulfide bond formation in some proteins. The polypeptide is Putative protein-disulfide oxidoreductase RC0029 (Rickettsia conorii (strain ATCC VR-613 / Malish 7)).